The sequence spans 357 residues: Guanine nucleotide-binding protein G(o) subunit alpha (357 aa).

Residue Gly-2 is the site of N-myristoyl glycine attachment. Residue Cys-3 is the site of S-palmitoyl cysteine attachment. Residues 32–357 enclose the G-alpha domain; that stretch reads KDIKLLLLGA…ANNLRGCGLY (326 aa). The G1 motif stretch occupies residues 35 to 48; it reads KLLLLGAGESGKST. Residues 40 to 47, 179 to 185, 204 to 208, 273 to 276, and Ala-329 contribute to the GTP site; these read GAGESGKS, LRTRVKT, DVGGQ, and NKKD. Residues Ser-47 and Thr-185 each coordinate Mg(2+). Residues 177-185 form a G2 motif region; the sequence is DILRTRVKT. Residues 200-209 are G3 motif; it reads FKLFDVGGQR. The segment at 269–276 is G4 motif; it reads ILFLNKKD. Residues 327–332 form a G5 motif region; it reads TCATDT.

This sequence belongs to the G-alpha family. G(i/o/t/z) subfamily. G proteins are composed of 3 units; alpha, beta and gamma. The alpha chain contains the guanine nucleotide binding site.

In terms of biological role, guanine nucleotide-binding proteins (G proteins) are involved as modulators or transducers in various transmembrane signaling systems. The G(o) protein function is not clear. The sequence is that of Guanine nucleotide-binding protein G(o) subunit alpha (SCGOA) from Mizuhopecten yessoensis (Japanese scallop).